Here is a 535-residue protein sequence, read N- to C-terminus: Thermosome subunit gamma (535 aa).

This sequence belongs to the TCP-1 chaperonin family. As to quaternary structure, forms a Heterooligomeric complex of two stacked eight-membered rings.

Molecular chaperone; binds unfolded polypeptides in vitro, and has a weak ATPase activity. The polypeptide is Thermosome subunit gamma (thsC) (Saccharolobus solfataricus (strain ATCC 35092 / DSM 1617 / JCM 11322 / P2) (Sulfolobus solfataricus)).